The chain runs to 87 residues: U3-theraphotoxin-Cg1b (87 aa).

An N-terminal signal peptide occupies residues 1–23 (MRTFTLIAILTCAVLVIFHVSAA). The propeptide occupies 24–48 (EELEAQDVIQPEDIFTGVATLEEDR). Cystine bridges form between cysteine 52/cysteine 65, cysteine 56/cysteine 79, and cysteine 73/cysteine 84.

The protein belongs to the neurotoxin 12 (Hwtx-2) family. 03 (juruin) subfamily. In terms of tissue distribution, expressed by the venom gland.

The protein localises to the secreted. Functionally, probable ion channel inhibitor. The sequence is that of U3-theraphotoxin-Cg1b from Chilobrachys guangxiensis (Chinese earth tiger tarantula).